A 288-amino-acid polypeptide reads, in one-letter code: Bis(5'-nucleosyl)-tetraphosphatase, symmetrical (288 aa).

It belongs to the Ap4A hydrolase family.

It catalyses the reaction P(1),P(4)-bis(5'-adenosyl) tetraphosphate + H2O = 2 ADP + 2 H(+). Functionally, hydrolyzes diadenosine 5',5'''-P1,P4-tetraphosphate to yield ADP. The polypeptide is Bis(5'-nucleosyl)-tetraphosphatase, symmetrical (Pseudomonas putida (strain GB-1)).